Reading from the N-terminus, the 310-residue chain is tRNA-cytidine(32) 2-sulfurtransferase (310 aa).

A PP-loop motif motif is present at residues 45–50 (SGGKDS). Cysteine 120, cysteine 123, and cysteine 211 together coordinate [4Fe-4S] cluster.

Belongs to the TtcA family. As to quaternary structure, homodimer. It depends on Mg(2+) as a cofactor. Requires [4Fe-4S] cluster as cofactor.

The protein resides in the cytoplasm. It carries out the reaction cytidine(32) in tRNA + S-sulfanyl-L-cysteinyl-[cysteine desulfurase] + AH2 + ATP = 2-thiocytidine(32) in tRNA + L-cysteinyl-[cysteine desulfurase] + A + AMP + diphosphate + H(+). Its pathway is tRNA modification. In terms of biological role, catalyzes the ATP-dependent 2-thiolation of cytidine in position 32 of tRNA, to form 2-thiocytidine (s(2)C32). The sulfur atoms are provided by the cysteine/cysteine desulfurase (IscS) system. In Shewanella baltica (strain OS185), this protein is tRNA-cytidine(32) 2-sulfurtransferase.